The primary structure comprises 93 residues: Large ribosomal subunit protein uL23cz/uL23cy (93 aa).

The protein belongs to the universal ribosomal protein uL23 family. In terms of assembly, part of the 50S ribosomal subunit.

The protein localises to the plastid. It is found in the chloroplast. In terms of biological role, binds to 23S rRNA. The chain is Large ribosomal subunit protein uL23cz/uL23cy (rpl23-A) from Piper cenocladum (Ant piper).